Consider the following 710-residue polypeptide: Lactotransferrin (710 aa).

The signal sequence occupies residues 1-19; that stretch reads MKLVFLVLLFLGALGLCLA. Phenylalanine 10 carries the phosphoserine; alternate modification. An O-linked (GlcNAc) serine; alternate glycan is attached at phenylalanine 10. The segment at 20–24 is critical for glycosaminoglycan, lipid A, lysozyme and DNA binding; that stretch reads GRRRS. Bactericidal and antifungal activity stretches follow at residues 20–29 and 39–49; these read GRRRSVQWCA and FQWQRNMRKVR. The important for full bactericidal and antifungal activities stretch occupies residues 21–22; sequence RR. 2 Transferrin-like domains span residues 25 to 352 and 364 to 695; these read VQWC…NLRK and VVWC…NLKK. Disulfide bonds link cysteine 28/cysteine 64 and cysteine 38/cysteine 55. Interaction with PspA stretches follow at residues 39–46 and 57–58; these read FQWQRNMR and KR. Residues 39 to 49 are interaction with lipopolysaccharide; sequence FQWQRNMRKVR. The involved in glycosaminoglycan binding stretch occupies residues 46 to 51; sequence RKVRGP. Aspartate 79 is a Fe(3+) binding site. Residue lysine 92 is part of the active site. A Fe(3+)-binding site is contributed by tyrosine 111. Disulfide bonds link cysteine 134–cysteine 217, cysteine 176–cysteine 192, cysteine 189–cysteine 200, and cysteine 250–cysteine 264. Hydrogencarbonate-binding residues include threonine 136, arginine 140, alanine 142, and glycine 143. Asparagine 156 carries N-linked (GlcNAc...) asparagine glycosylation. Tyrosine 211 provides a ligand contact to Fe(3+). Histidine 272 provides a ligand contact to Fe(3+). Serine 278 functions as the Nucleophile in the catalytic mechanism. Cystine bridges form between cysteine 367/cysteine 399 and cysteine 377/cysteine 390. Residues glutamine 379 and serine 391 each participate in a glycyl lysine isopeptide (Lys-Gly) (interchain with G-Cter in ubiquitin) cross-link. Fe(3+) is bound by residues aspartate 414 and tyrosine 454. 8 cysteine pairs are disulfide-bonded: cysteine 424–cysteine 705, cysteine 446–cysteine 668, cysteine 478–cysteine 553, cysteine 502–cysteine 696, cysteine 512–cysteine 526, cysteine 523–cysteine 536, cysteine 594–cysteine 608, and cysteine 646–cysteine 651. Hydrogencarbonate contacts are provided by threonine 480, arginine 484, alanine 486, and glycine 487. A glycan (N-linked (GlcNAc...) asparagine) is linked at asparagine 497. Tyrosine 547 is a Fe(3+) binding site. Histidine 616 provides a ligand contact to Fe(3+). A glycan (N-linked (GlcNAc...) asparagine) is linked at asparagine 642.

This sequence belongs to the transferrin family. In terms of assembly, monomer. Found in a complex with LTF, CLU, EPPIN and SEMG1. Found in a complex with MPO and LTF; interacts directly with CP, allows Fe(3+) incorporation into LTF and activation of CP ferroxidase activity. In terms of processing, phosphorylation at Ser-10 activates the transcriptional activity. Phosphorylation at Ser-10 also promotes proteasomal degradation. Alternatively can undergo O-GlcNAcylation at Ser-10. Post-translationally, O-GlcNAcylation at Ser-10 inhibits DNA binding and negatively regulates the transcriptional activity. Alternatively can undergo phosphorylation at Ser-10. Poly-N-acetyllactosaminic carbohydrate moiety seems to be needed for TLR4 activation. High levels are found in saliva and tears, intermediate levels in serum and plasma, and low levels in urine. In kidney, detected in the distal collecting tubules in the medulla but not in the cortical region or in blood vessels. Detected in peripheral blood neutrophils (at protein level). Isoform 1 and isoform DeltaLf are expressed in breast, prostate, spleen, pancreas, kidney, small intestine, lung, skeletal muscle, uterus, thymus and fetal liver. Isoform 1 is expressed in brain, testis and peripheral blood leukocytes; isoform DeltaLf is barely detectable in these tissues. Isoform DeltaLf is expressed in placenta, liver and ovary; isoform 1 is barely detectable in these tissues. In kidney, isoform 1 is expressed at high levels in the collecting tubules of the medulla but at very low levels in the cortex.

It localises to the secreted. The protein localises to the cytoplasmic granule. It is found in the cytoplasm. Its subcellular location is the nucleus. Its function is as follows. Transferrins are iron binding transport proteins which can bind two Fe(3+) ions in association with the binding of an anion, usually bicarbonate. In terms of biological role, major iron-binding and multifunctional protein found in exocrine fluids such as breast milk and mucosal secretions. Has antimicrobial activity, which depends on the extracellular cation concentration. Antimicrobial properties include bacteriostasis, which is related to its ability to sequester free iron and thus inhibit microbial growth, as well as direct bactericidal properties leading to the release of lipopolysaccharides from the bacterial outer membrane. Can also prevent bacterial biofilm development in P.aeruginosa infection. Has weak antifungal activity against C.albicans. Has anabolic, differentiating and anti-apoptotic effects on osteoblasts and can also inhibit osteoclastogenesis, possibly playing a role in the regulation of bone growth. Promotes binding of species C adenoviruses to epithelial cells, promoting adenovirus infection. Can inhibit papillomavirus infections. Stimulates the TLR4 signaling pathway leading to NF-kappa-B activation and subsequent pro-inflammatory cytokine production while also interfering with the lipopolysaccharide (LPS)-stimulated TLR4 signaling. Inhibits neutrophil granulocyte migration to sites of apoptosis, when secreted by apoptotic cells. Stimulates VEGFA-mediated endothelial cell migration and proliferation. Binds heparin, chondroitin sulfate and possibly other glycosaminoglycans (GAGs). Also binds specifically to pneumococcal surface protein A (PspA), the lipid A portion of bacterial lipopolysaccharide (LPS), lysozyme and DNA. Functionally, lactoferricin binds to the bacterial surface and is crucial for the bactericidal functions. Has some antiviral activity against papillomavirus infection. N-terminal region shows strong antifungal activity against C.albicans. Contains two BBXB heparin-binding consensus sequences that appear to form the predominate functional GAG-binding site. Has antimicrobial activity and is able to permeabilize different ions through liposomal membranes. Its function is as follows. Has opioid antagonist activity. Shows preference for mu-receptor. In terms of biological role, has opioid antagonist activity. Shows higher degrees of preference for kappa-receptors than for mu-receptors. Functionally, the lactotransferrin transferrin-like domain 1 functions as a serine protease of the peptidase S60 family that cuts arginine rich regions. This function contributes to the antimicrobial activity. Shows a preferential cleavage at -Arg-Ser-Arg-Arg-|- and -Arg-Arg-Ser-Arg-|-, and of Z-Phe-Arg-|-aminomethylcoumarin sites. Transcription factor with antiproliferative properties and ability to induce cell cycle arrest. Binds to the DeltaLf response element found in the SKP1, BAX, DCPS, and SELENOH promoters. The polypeptide is Lactotransferrin (Homo sapiens (Human)).